The primary structure comprises 151 residues: Cell division protein SepF (151 aa).

A disordered region spans residues 31–53 (EEVEEPRRRSRTGVKQERETGQN).

This sequence belongs to the SepF family. As to quaternary structure, homodimer. Interacts with FtsZ.

The protein localises to the cytoplasm. Functionally, cell division protein that is part of the divisome complex and is recruited early to the Z-ring. Probably stimulates Z-ring formation, perhaps through the cross-linking of FtsZ protofilaments. Its function overlaps with FtsA. In Halalkalibacterium halodurans (strain ATCC BAA-125 / DSM 18197 / FERM 7344 / JCM 9153 / C-125) (Bacillus halodurans), this protein is Cell division protein SepF.